The chain runs to 277 residues: Large ribosomal subunit protein uL2 (277 aa).

Basic residues-rich tracts occupy residues 210–219 and 259–277; these read RARWAGKRPQ and TRSK…RNKK. The segment at 210 to 277 is disordered; that stretch reads RARWAGKRPQ…KFIVRSRNKK (68 aa).

The protein belongs to the universal ribosomal protein uL2 family. Part of the 50S ribosomal subunit. Forms a bridge to the 30S subunit in the 70S ribosome.

In terms of biological role, one of the primary rRNA binding proteins. Required for association of the 30S and 50S subunits to form the 70S ribosome, for tRNA binding and peptide bond formation. It has been suggested to have peptidyltransferase activity; this is somewhat controversial. Makes several contacts with the 16S rRNA in the 70S ribosome. In Ligilactobacillus salivarius (strain UCC118) (Lactobacillus salivarius), this protein is Large ribosomal subunit protein uL2.